Consider the following 99-residue polypeptide: Ubiquitin-related modifier 1 homolog (99 aa).

Gly99 carries the 1-thioglycine modification. Gly99 participates in a covalent cross-link: Glycyl lysine isopeptide (Gly-Lys) (interchain with K-? in acceptor proteins).

This sequence belongs to the URM1 family. C-terminal thiocarboxylation occurs in 2 steps, it is first acyl-adenylated (-COAMP) via the hesA/moeB/thiF part of the MOCS3 homolog, then thiocarboxylated (-COSH) via the rhodanese domain of the MOCS3 homolog.

It is found in the cytoplasm. It participates in tRNA modification; 5-methoxycarbonylmethyl-2-thiouridine-tRNA biosynthesis. In terms of biological role, acts as a sulfur carrier required for 2-thiolation of mcm(5)S(2)U at tRNA wobble positions of cytosolic tRNA(Lys), tRNA(Glu) and tRNA(Gln). Serves as sulfur donor in tRNA 2-thiolation reaction by being thiocarboxylated (-COSH) at its C-terminus by MOCS3. The sulfur is then transferred to tRNA to form 2-thiolation of mcm(5)S(2)U. Also acts as a ubiquitin-like protein (UBL) that is covalently conjugated via an isopeptide bond to lysine residues of target proteins. The thiocarboxylated form serves as substrate for conjugation and oxidative stress specifically induces the formation of UBL-protein conjugates. The chain is Ubiquitin-related modifier 1 homolog from Chlamydomonas reinhardtii (Chlamydomonas smithii).